Reading from the N-terminus, the 281-residue chain is Urease accessory protein UreD (281 aa).

A disordered region spans residues 1-25 (MLNTLEPQPCETDALSPRLQRSTGS).

The protein belongs to the UreD family. In terms of assembly, ureD, UreF and UreG form a complex that acts as a GTP-hydrolysis-dependent molecular chaperone, activating the urease apoprotein by helping to assemble the nickel containing metallocenter of UreC. The UreE protein probably delivers the nickel.

The protein resides in the cytoplasm. In terms of biological role, required for maturation of urease via the functional incorporation of the urease nickel metallocenter. The chain is Urease accessory protein UreD from Dinoroseobacter shibae (strain DSM 16493 / NCIMB 14021 / DFL 12).